A 119-amino-acid polypeptide reads, in one-letter code: Basic phospholipase A2 homolog 1 (119 aa).

7 cysteine pairs are disulfide-bonded: C11/C72, C27/C118, C29/C45, C44/C99, C51/C92, C61/C85, and C79/C90. The important for membrane-damaging activities in eukaryotes and bacteria; heparin-binding stretch occupies residues 107-117 (KENYNIDPKKR).

The protein belongs to the phospholipase A2 family. Group I subfamily. D49 sub-subfamily. As to expression, expressed by the venom gland.

The protein localises to the secreted. This is Basic phospholipase A2 homolog 1 from Notechis scutatus scutatus (Mainland tiger snake).